The primary structure comprises 413 residues: Phosphopentomutase (413 aa).

Mn(2+)-binding residues include D11, D306, H311, D347, H348, and H359.

Belongs to the phosphopentomutase family. Requires Mn(2+) as cofactor.

The protein resides in the cytoplasm. It catalyses the reaction 2-deoxy-alpha-D-ribose 1-phosphate = 2-deoxy-D-ribose 5-phosphate. The catalysed reaction is alpha-D-ribose 1-phosphate = D-ribose 5-phosphate. It functions in the pathway carbohydrate degradation; 2-deoxy-D-ribose 1-phosphate degradation; D-glyceraldehyde 3-phosphate and acetaldehyde from 2-deoxy-alpha-D-ribose 1-phosphate: step 1/2. In terms of biological role, isomerase that catalyzes the conversion of deoxy-ribose 1-phosphate (dRib-1-P) and ribose 1-phosphate (Rib-1-P) to deoxy-ribose 5-phosphate (dRib-5-P) and ribose 5-phosphate (Rib-5-P), respectively. The polypeptide is Phosphopentomutase (Helicobacter pylori (strain ATCC 700392 / 26695) (Campylobacter pylori)).